A 65-amino-acid chain; its full sequence is Sec-independent protein translocase protein TatA (65 aa).

A helical membrane pass occupies residues methionine 1–glycine 21.

The protein belongs to the TatA/E family. As to quaternary structure, forms a complex with TatC.

The protein localises to the cell inner membrane. Its function is as follows. Part of the twin-arginine translocation (Tat) system that transports large folded proteins containing a characteristic twin-arginine motif in their signal peptide across membranes. TatA could form the protein-conducting channel of the Tat system. This Chlorobium phaeobacteroides (strain DSM 266 / SMG 266 / 2430) protein is Sec-independent protein translocase protein TatA.